A 448-amino-acid chain; its full sequence is Neurexin-1b-beta (448 aa).

An N-terminal signal peptide occupies residues 1–38; the sequence is MFGGWRLVVWQIFSEIITRRLGFWICLYFAALSVGMIS. Residues 39–375 are Extracellular-facing; sequence GSEPLVRTRH…EVFRESNGTT (337 aa). Residues 71–269 enclose the Laminin G-like domain; the sequence is STYVFGRQGG…DPNVRMEGSV (199 aa). Residues 376–396 form a helical membrane-spanning segment; sequence GMVVGIVAGAALCILILLYAM. The Cytoplasmic segment spans residues 397–448; that stretch reads YKYRNRDEGSYHVDESRNYICNSNGAALKEKNTADDDSGSKSKKNKNKEYYV. The span at 426–436 shows a compositional bias: basic and acidic residues; it reads EKNTADDDSGS. Residues 426-448 are disordered; it reads EKNTADDDSGSKSKKNKNKEYYV.

Belongs to the neurexin family.

It localises to the membrane. Its function is as follows. Neuronal cell surface protein that may be involved in cell recognition and cell adhesion. May play a role in formation or maintenance of synaptic junctions. This Danio rerio (Zebrafish) protein is Neurexin-1b-beta (nrxn1b).